The primary structure comprises 448 residues: Glucose-6-phosphate isomerase (448 aa).

Glu290 serves as the catalytic Proton donor. Catalysis depends on residues His311 and Lys425.

It belongs to the GPI family.

The protein localises to the cytoplasm. The enzyme catalyses alpha-D-glucose 6-phosphate = beta-D-fructose 6-phosphate. It participates in carbohydrate biosynthesis; gluconeogenesis. Its pathway is carbohydrate degradation; glycolysis; D-glyceraldehyde 3-phosphate and glycerone phosphate from D-glucose: step 2/4. Functionally, catalyzes the reversible isomerization of glucose-6-phosphate to fructose-6-phosphate. This is Glucose-6-phosphate isomerase from Lactococcus lactis subsp. lactis (strain IL1403) (Streptococcus lactis).